Here is a 41-residue protein sequence, read N- to C-terminus: Photosystem I reaction center subunit IX (41 aa).

The helical transmembrane segment at 7–27 (YLSTAPVLLTLWMTFTAGFII) threads the bilayer.

The protein belongs to the PsaJ family.

The protein localises to the plastid. It is found in the chloroplast thylakoid membrane. Its function is as follows. May help in the organization of the PsaE and PsaF subunits. The protein is Photosystem I reaction center subunit IX of Thalassiosira pseudonana (Marine diatom).